The chain runs to 294 residues: 33 kDa chaperonin (294 aa).

Intrachain disulfides connect cysteine 239/cysteine 241 and cysteine 272/cysteine 275.

This sequence belongs to the HSP33 family. In terms of processing, under oxidizing conditions two disulfide bonds are formed involving the reactive cysteines. Under reducing conditions zinc is bound to the reactive cysteines and the protein is inactive.

It is found in the cytoplasm. Its function is as follows. Redox regulated molecular chaperone. Protects both thermally unfolding and oxidatively damaged proteins from irreversible aggregation. Plays an important role in the bacterial defense system toward oxidative stress. This Lacticaseibacillus casei (strain BL23) (Lactobacillus casei) protein is 33 kDa chaperonin.